A 147-amino-acid polypeptide reads, in one-letter code: Large ribosomal subunit protein bL9 (147 aa).

It belongs to the bacterial ribosomal protein bL9 family.

Binds to the 23S rRNA. This Campylobacter fetus subsp. fetus (strain 82-40) protein is Large ribosomal subunit protein bL9.